The primary structure comprises 110 residues: Iron-sulfur cluster assembly protein CyaY (110 aa).

The protein belongs to the frataxin family.

Involved in iron-sulfur (Fe-S) cluster assembly. May act as a regulator of Fe-S biogenesis. The sequence is that of Iron-sulfur cluster assembly protein CyaY from Azotobacter vinelandii (strain DJ / ATCC BAA-1303).